Here is a 542-residue protein sequence, read N- to C-terminus: CTP synthase (542 aa).

Positions 1 to 265 (MARYVFITGG…DDEVLAAFGI (265 aa)) are amidoligase domain. Position 13 (S13) interacts with CTP. S13 lines the UTP pocket. ATP-binding positions include 14 to 19 (SLGKGI) and D71. Mg(2+)-binding residues include D71 and E139. CTP contacts are provided by residues 146 to 148 (DIE), 186 to 191 (KTKPTQ), and K222. Residues 186-191 (KTKPTQ) and K222 each bind UTP. One can recognise a Glutamine amidotransferase type-1 domain in the interval 291 to 541 (TIAIVGKYTG…IEAATEQSRL (251 aa)). G353 serves as a coordination point for L-glutamine. The active-site Nucleophile; for glutamine hydrolysis is C380. Residues 381-384 (FGMQ), E404, and R469 contribute to the L-glutamine site. Active-site residues include H514 and E516.

Belongs to the CTP synthase family. In terms of assembly, homotetramer.

The catalysed reaction is UTP + L-glutamine + ATP + H2O = CTP + L-glutamate + ADP + phosphate + 2 H(+). It carries out the reaction L-glutamine + H2O = L-glutamate + NH4(+). It catalyses the reaction UTP + NH4(+) + ATP = CTP + ADP + phosphate + 2 H(+). It participates in pyrimidine metabolism; CTP biosynthesis via de novo pathway; CTP from UDP: step 2/2. Its activity is regulated as follows. Allosterically activated by GTP, when glutamine is the substrate; GTP has no effect on the reaction when ammonia is the substrate. The allosteric effector GTP functions by stabilizing the protein conformation that binds the tetrahedral intermediate(s) formed during glutamine hydrolysis. Inhibited by the product CTP, via allosteric rather than competitive inhibition. Its function is as follows. Catalyzes the ATP-dependent amination of UTP to CTP with either L-glutamine or ammonia as the source of nitrogen. Regulates intracellular CTP levels through interactions with the four ribonucleotide triphosphates. The protein is CTP synthase of Rhizobium etli (strain CIAT 652).